A 1015-amino-acid polypeptide reads, in one-letter code: Probable beta-galactosidase B (1015 aa).

Positions 1 to 21 (MAHIYRLLLLLLSNLWFSAAA) are cleaved as a signal peptide. N-linked (GlcNAc...) asparagine glycosylation is present at Asn-23. Tyr-90 serves as a coordination point for substrate. An N-linked (GlcNAc...) asparagine glycan is attached at Asn-100. 3 residues coordinate substrate: Asn-135, Ala-136, and Glu-137. The N-linked (GlcNAc...) asparagine glycan is linked to Asn-172. Asn-195 is a binding site for substrate. Glu-196 acts as the Proton donor in catalysis. An N-linked (GlcNAc...) asparagine glycan is attached at Asn-211. Position 265 (Tyr-265) interacts with substrate. A disulfide bridge links Cys-271 with Cys-324. Glu-308 acts as the Nucleophile in catalysis. Tyr-373 contacts substrate. 9 N-linked (GlcNAc...) asparagine glycosylation sites follow: Asn-411, Asn-441, Asn-456, Asn-554, Asn-679, Asn-735, Asn-775, Asn-821, and Asn-878.

The protein belongs to the glycosyl hydrolase 35 family.

Its subcellular location is the secreted. The catalysed reaction is Hydrolysis of terminal non-reducing beta-D-galactose residues in beta-D-galactosides.. Its function is as follows. Cleaves beta-linked terminal galactosyl residues from gangliosides, glycoproteins, and glycosaminoglycans. This chain is Probable beta-galactosidase B (lacB), found in Neosartorya fischeri (strain ATCC 1020 / DSM 3700 / CBS 544.65 / FGSC A1164 / JCM 1740 / NRRL 181 / WB 181) (Aspergillus fischerianus).